A 1030-amino-acid chain; its full sequence is F-box/WD repeat-containing protein 10 (1030 aa).

One can recognise an F-box domain in the interval 280-329 (RDFIRDLPLHLSKYILRMLDKHSLNRCIFVSQHWATLAQQVKVDQSMHSF). 5 WD repeats span residues 466-505 (GHAGSVRALFLSEEDNILLSGSYDLSIRYWDVKTGACVRI), 508-547 (GHQGTITCLDVYKNRLVSGAKDGQVKEWDIETGKCLKTFK), 549-584 (KDPILAAKISETYIVSSCERGIVKVWHVVTAQLQKT), 587-624 (GHEGAVKCLFFNEWHLVSGGADGLVMAWSMVGKYERCL), and 626-667 (AFKH…KVIK). A disordered region spans residues 709–773 (KNKVKKSKDK…LSSDDMETPV (65 aa)). Residues 716–733 (KDKEEEREETSLGDEHSR) are compositionally biased toward basic and acidic residues. Over residues 734-749 (STIQGHSLKDSVSSKQ) the composition is skewed to polar residues. Residues 963–992 (FMLMTVKEEKEFAEAKMKEYEASVSTKEVD) are a coiled coil.

Its function is as follows. Probable substrate-recognition component of a SCF (SKP1-CUL1-F-box protein)-type E3 ubiquitin ligase complex which mediates the ubiquitination and subsequent proteasomal degradation of target proteins. Overexpression is leading to degradation of CBX5 and CBX1. The sequence is that of F-box/WD repeat-containing protein 10 (Fbxw10) from Mus musculus (Mouse).